Consider the following 394-residue polypeptide: Flap endonuclease 1-A (394 aa).

The interval 1-105 (MGIKGLTKLI…RELAKRFARR (105 aa)) is N-domain. Asp-34 is a Mg(2+) binding site. Arg-71 is a binding site for DNA. Residues Asp-87, Glu-159, Glu-161, Asp-180, and Asp-182 each contribute to the Mg(2+) site. Positions 123–254 (DVEKYSKKTV…QTALKMIRQH (132 aa)) are I-domain. Position 159 (Glu-159) interacts with DNA. 2 residues coordinate DNA: Gly-232 and Asp-234. Asp-234 is a binding site for Mg(2+). An interaction with PCNA region spans residues 338–346 (SQGRLESFF). The interval 343–394 (ESFFGVSSSSSNKRKEAPDSEASAGKQVKTAAAVKPAKAASKKGPAKGGKKK) is disordered. Low complexity predominate over residues 368-381 (KQVKTAAAVKPAKA). The span at 382-394 (ASKKGPAKGGKKK) shows a compositional bias: basic residues.

Belongs to the XPG/RAD2 endonuclease family. FEN1 subfamily. In terms of assembly, interacts with PCNA. Three molecules of FEN1 bind to one PCNA trimer with each molecule binding to one PCNA monomer. PCNA stimulates the nuclease activity without altering cleavage specificity. Requires Mg(2+) as cofactor. In terms of processing, phosphorylated. Phosphorylation upon DNA damage induces relocalization to the nuclear plasma.

Its subcellular location is the nucleus. The protein resides in the nucleolus. It localises to the nucleoplasm. It is found in the mitochondrion. Its function is as follows. Structure-specific nuclease with 5'-flap endonuclease and 5'-3' exonuclease activities involved in DNA replication and repair. During DNA replication, cleaves the 5'-overhanging flap structure that is generated by displacement synthesis when DNA polymerase encounters the 5'-end of a downstream Okazaki fragment. It enters the flap from the 5'-end and then tracks to cleave the flap base, leaving a nick for ligation. Also involved in the long patch base excision repair (LP-BER) pathway, by cleaving within the apurinic/apyrimidinic (AP) site-terminated flap. Acts as a genome stabilization factor that prevents flaps from equilibrating into structures that lead to duplications and deletions. Also possesses 5'-3' exonuclease activity on nicked or gapped double-stranded DNA, and exhibits RNase H activity. Also involved in replication and repair of rDNA and in repairing mitochondrial DNA. The protein is Flap endonuclease 1-A of Physcomitrium patens (Spreading-leaved earth moss).